The sequence spans 466 residues: Ribulose bisphosphate carboxylase large chain (466 aa).

Residue Lys-4 is modified to N6,N6,N6-trimethyllysine. Substrate is bound by residues Asn-113 and Thr-163. Catalysis depends on Lys-165, which acts as the Proton acceptor. Lys-167 serves as a coordination point for substrate. Mg(2+)-binding residues include Lys-191, Asp-193, and Glu-194. The residue at position 191 (Lys-191) is an N6-carboxylysine. The active-site Proton acceptor is the His-284. The substrate site is built by Arg-285, His-317, and Ser-369.

This sequence belongs to the RuBisCO large chain family. Type I subfamily. As to quaternary structure, heterohexadecamer of 8 large chains and 8 small chains; disulfide-linked. The disulfide link is formed within the large subunit homodimers. The cofactor is Mg(2+). Post-translationally, the disulfide bond which can form in the large chain dimeric partners within the hexadecamer appears to be associated with oxidative stress and protein turnover.

It is found in the plastid. The protein localises to the chloroplast. It carries out the reaction 2 (2R)-3-phosphoglycerate + 2 H(+) = D-ribulose 1,5-bisphosphate + CO2 + H2O. The enzyme catalyses D-ribulose 1,5-bisphosphate + O2 = 2-phosphoglycolate + (2R)-3-phosphoglycerate + 2 H(+). Its function is as follows. RuBisCO catalyzes two reactions: the carboxylation of D-ribulose 1,5-bisphosphate, the primary event in carbon dioxide fixation, as well as the oxidative fragmentation of the pentose substrate in the photorespiration process. Both reactions occur simultaneously and in competition at the same active site. The sequence is that of Ribulose bisphosphate carboxylase large chain from Aphelandra sinclairiana (Orange shrimp plant).